Consider the following 306-residue polypeptide: Putative dihydroorotate dehydrogenase A (fumarate) (306 aa).

FMN-binding positions include Ser-20 and 44–45 (KG). Residues Lys-44 and 68–72 (NSIGL) each bind substrate. Residues Asn-98 and Asn-126 each coordinate FMN. Asn-126 provides a ligand contact to substrate. Residue Cys-129 is the Nucleophile of the active site. FMN is bound by residues Lys-164 and Ile-190. Residue 191–192 (NT) coordinates substrate. FMN-binding positions include Gly-216, 244–245 (GG), and 266–267 (GT).

The protein belongs to the dihydroorotate dehydrogenase family. Type 1 subfamily. As to quaternary structure, homodimer. FMN serves as cofactor.

Its subcellular location is the cytoplasm. The enzyme catalyses (S)-dihydroorotate + fumarate = orotate + succinate. Its pathway is pyrimidine metabolism; UMP biosynthesis via de novo pathway. Its function is as follows. Catalyzes the conversion of dihydroorotate to orotate with fumarate as the electron acceptor. This is Putative dihydroorotate dehydrogenase A (fumarate) (pyrD) from Aquifex aeolicus (strain VF5).